The primary structure comprises 443 residues: Nitrate/nitrite binding protein NrtA (443 aa).

A signal peptide spans methionine 1 to alanine 25. The N-palmitoyl cysteine moiety is linked to residue cysteine 26. The S-diacylglycerol cysteine moiety is linked to residue cysteine 26. Over residues serine 31 to glycine 46 the composition is skewed to low complexity. The segment at serine 31–alanine 52 is disordered. 5 residues coordinate nitrate: tryptophan 96, glutamine 150, histidine 195, glycine 239, and lysine 268.

The protein belongs to the CmpA/NrtA family. In terms of assembly, the complex is composed of two ATP-binding proteins (NrtC and NrtD), two transmembrane proteins (NrtB) and a solute-binding protein (NrtA). NrtA can form homotrimers. The N-terminus is blocked.

It is found in the cell inner membrane. Part of the ABC transporter complex NrtABCD involved in nitrate uptake. The complex is probably also involved in nitrite transport. NrtA is the substrate-binding protein. Binds both nitrate and nitrite with high affinity. This Synechococcus elongatus (strain ATCC 33912 / PCC 7942 / FACHB-805) (Anacystis nidulans R2) protein is Nitrate/nitrite binding protein NrtA.